The sequence spans 420 residues: Tyrosine--tRNA ligase (420 aa).

An L-tyrosine-binding site is contributed by tyrosine 33. The short motif at 38–47 (PTGPSLHAGH) is the 'HIGH' region element. L-tyrosine-binding residues include tyrosine 167 and glutamine 171. The short motif at 227–231 (KFGKS) is the 'KMSKS' region element. An ATP-binding site is contributed by lysine 230. In terms of domain architecture, S4 RNA-binding spans 352-418 (RTIIDLLVAS…GKKNFAGVQI (67 aa)).

It belongs to the class-I aminoacyl-tRNA synthetase family. TyrS type 1 subfamily. As to quaternary structure, homodimer.

It localises to the cytoplasm. It catalyses the reaction tRNA(Tyr) + L-tyrosine + ATP = L-tyrosyl-tRNA(Tyr) + AMP + diphosphate + H(+). Its function is as follows. Catalyzes the attachment of tyrosine to tRNA(Tyr) in a two-step reaction: tyrosine is first activated by ATP to form Tyr-AMP and then transferred to the acceptor end of tRNA(Tyr). In Corynebacterium glutamicum (strain ATCC 13032 / DSM 20300 / JCM 1318 / BCRC 11384 / CCUG 27702 / LMG 3730 / NBRC 12168 / NCIMB 10025 / NRRL B-2784 / 534), this protein is Tyrosine--tRNA ligase.